The following is a 617-amino-acid chain: Chaperone protein HscA homolog (617 aa).

This sequence belongs to the heat shock protein 70 family.

In terms of biological role, chaperone involved in the maturation of iron-sulfur cluster-containing proteins. Has a low intrinsic ATPase activity which is markedly stimulated by HscB. The chain is Chaperone protein HscA homolog from Photobacterium profundum (strain SS9).